The following is a 179-amino-acid chain: Transcription termination/antitermination protein NusG (179 aa).

Residues 130 to 157 (EGDVVQIIDGAFMGQEGRVVEIENNKVK) form the KOW domain.

The protein belongs to the NusG family.

In terms of biological role, participates in transcription elongation, termination and antitermination. This chain is Transcription termination/antitermination protein NusG, found in Streptococcus pyogenes serotype M1.